A 197-amino-acid polypeptide reads, in one-letter code: Superoxide dismutase [Fe] (197 aa).

Fe cation is bound by residues H26, H75, D157, and H161.

This sequence belongs to the iron/manganese superoxide dismutase family. Homotetramer. The cofactor is Fe cation.

It catalyses the reaction 2 superoxide + 2 H(+) = H2O2 + O2. Its function is as follows. Destroys superoxide anion radicals which are normally produced within the cells and which are toxic to biological systems. The polypeptide is Superoxide dismutase [Fe] (Cupriavidus metallidurans (strain ATCC 43123 / DSM 2839 / NBRC 102507 / CH34) (Ralstonia metallidurans)).